We begin with the raw amino-acid sequence, 157 residues long: DNA-binding protein MNB1B (157 aa).

Disordered stretches follow at residues 1 to 45 (MKGA…KRAP), 59 to 87 (FKEKNPKNKSVAAVGKAAGDRWKSLSESD), and 109 to 157 (YNKG…DDDE). 2 stretches are compositionally biased toward basic and acidic residues: residues 10–27 (AKADAKLAVKSKGAEKPA) and 76–87 (AGDRWKSLSESD). Positions 41-110 (PKRAPSAFFV…EYNKAIAAYN (70 aa)) form a DNA-binding region, HMG box. Acidic residues-rich tracts occupy residues 124–133 (EEEEEDEEES) and 141–157 (NDEDDEEGSEEDEDDDE). A Phosphoserine; by CK2 modification is found at serine 149.

As to expression, expressed in all tissues examined.

Its subcellular location is the nucleus. Its function is as follows. Recognizes an AAGG motif at the MNF1-binding site. The sequence is that of DNA-binding protein MNB1B (MNB1B) from Zea mays (Maize).